Reading from the N-terminus, the 481-residue chain is Zinc metalloproteinase/disintegrin (481 aa).

Residues M1–S20 form the signal peptide. Residues I21–E190 constitute a propeptide that is removed on maturation. The 196-residue stretch at R197 to P392 folds into the Peptidase M12B domain. E200 and D284 together coordinate Ca(2+). Intrachain disulfides connect C308-C387, C349-C371, and C351-C354. Residue H333 coordinates Zn(2+). Residue E334 is part of the active site. 2 residues coordinate Zn(2+): H337 and H343. C387 and N390 together coordinate Ca(2+). The propeptide occupies L393–A410. Residues T400–G481 enclose the Disintegrin domain. Disulfide bonds link C414–C429, C416–C424, C423–C446, C437–C443, C442–C467, and C455–C474. The short motif at R459 to D461 is the Cell attachment site element.

Belongs to the venom metalloproteinase (M12B) family. P-II subfamily. P-IIa sub-subfamily. Monomer. It depends on Zn(2+) as a cofactor. Expressed by the venom gland.

It is found in the secreted. In terms of biological role, impairs hemostasis in the envenomed animal. Its function is as follows. Inhibits platelet aggregation induced by ADP and collagen. Acts by inhibiting fibrinogen interaction with platelet receptors GPIIb/GPIIIa (ITGA2B/ITGB3). Has antitumor-growth activity. The sequence is that of Zinc metalloproteinase/disintegrin from Protobothrops jerdonii (Jerdon's pitviper).